The sequence spans 372 residues: MRSIIADSKRLVVKVGSSLVTNDGKGLDHAAIGRWAAQIAALRAQGKEVVLVSSGAIAEGMQRLGWSKRPREIDELQAAAAVGQMGLAQVYESRFTEHGIRTAQILLTHADLADRERYLNARSTLLTLLRLGVVPIINENDTVVTDEIKFGDNDTLGALVANLIEGDALIILTDQSGLFTADPRKDPAATLVAEANAGAPELEAMAGGAGSSLGRGGMLTKILAAKRAAHSGANTVIASGREPDVLVRLAGGEAIGTQLIARTARMAARKQWMADHLQVRGHVVIDAGAVEKLTAGGKSLLPIGVTDVQGAFARGEVIACVGPDGREVARGLTNYSSAETKLIHRKPSGEIESVLGYMLEPELIHRDNLVLV.

Residue lysine 14 participates in ATP binding. Substrate is bound by residues serine 54, aspartate 141, and asparagine 153. 173-174 (TD) lines the ATP pocket. The 79-residue stretch at 280–358 (RGHVVIDAGA…GEIESVLGYM (79 aa)) folds into the PUA domain.

It belongs to the glutamate 5-kinase family.

It is found in the cytoplasm. It carries out the reaction L-glutamate + ATP = L-glutamyl 5-phosphate + ADP. Its pathway is amino-acid biosynthesis; L-proline biosynthesis; L-glutamate 5-semialdehyde from L-glutamate: step 1/2. Functionally, catalyzes the transfer of a phosphate group to glutamate to form L-glutamate 5-phosphate. In Burkholderia multivorans (strain ATCC 17616 / 249), this protein is Glutamate 5-kinase.